The chain runs to 93 residues: Small ribosomal subunit protein uS19 (93 aa).

Belongs to the universal ribosomal protein uS19 family.

Its function is as follows. Protein S19 forms a complex with S13 that binds strongly to the 16S ribosomal RNA. This chain is Small ribosomal subunit protein uS19, found in Paenarthrobacter aurescens (strain TC1).